The chain runs to 406 residues: NIPA-like protein 3 (406 aa).

4 consecutive transmembrane segments (helical) span residues 33-53 (NLIGALLAIFGHLVVSIALNL), 76-96 (WWLGLFLMLLGELGVFASYAF), 101-121 (LIVPLSAVSVIASAIIGIIFI), and 135-155 (ILSFVGCGLAVVGTYLLVTFA). N-linked (GlcNAc...) asparagine glycosylation occurs at N166. Helical transmembrane passes span 171-191 (LVSWPFLLYMLVEIILFCLLL), 202-222 (IVVILLLVALLGSMTVVTVKA), 240-260 (PIFYVMFVCMVATAVYQAAFL), 271-291 (LIASVGYILSTTIAITAGAIF), and 300-320 (VLHICMFALGCLIAFLGVFLI). At S372 the chain carries Phosphoserine.

It belongs to the NIPA family.

It is found in the membrane. The protein is NIPA-like protein 3 (NIPAL3) of Pongo abelii (Sumatran orangutan).